Reading from the N-terminus, the 533-residue chain is Flavin-containing monooxygenase 5 (533 aa).

Arg-5 carries the dimethylated arginine modification. FAD-binding positions include 10–14, Glu-33, and 41–42; these read GGGVS and LW. Ser-54 carries the post-translational modification Phosphoserine. Tyr-56 bears the Phosphotyrosine mark. At Ser-58 the chain carries Phosphoserine. 62-63 lines the FAD pocket; sequence NT. Residue 196–199 participates in NADP(+) binding; sequence SGGD. Position 280 is a phosphoserine (Ser-280). Phosphothreonine is present on Thr-284. Ser-401 carries the phosphoserine modification. Residues 510–530 form a helical membrane-spanning segment; that stretch reads MVSAVTTGCFMLAVVFFAIIM.

The protein belongs to the FMO family. The cofactor is FAD. In terms of tissue distribution, expressed in liver.

It is found in the microsome membrane. Its subcellular location is the endoplasmic reticulum membrane. The enzyme catalyses N,N-dimethylaniline + NADPH + O2 + H(+) = N,N-dimethylaniline N-oxide + NADP(+) + H2O. It catalyses the reaction NADPH + O2 + H(+) = H2O2 + NADP(+). It carries out the reaction heptan-2-one + NADPH + O2 + H(+) = pentyl acetate + NADP(+) + H2O. The catalysed reaction is octan-3-one + NADPH + O2 + H(+) = pentyl propanoate + NADP(+) + H2O. The enzyme catalyses octan-3-one + NADPH + O2 + H(+) = ethyl hexanoate + NADP(+) + H2O. It catalyses the reaction hexan-3-one + NADPH + O2 + H(+) = ethyl butanoate + NADP(+) + H2O. It carries out the reaction hexan-3-one + NADPH + O2 + H(+) = propyl propanoate + NADP(+) + H2O. The catalysed reaction is heptan-4-one + NADPH + O2 + H(+) = propyl butanoate + NADP(+) + H2O. The enzyme catalyses (2E)-geranial + NADPH + O2 + H(+) = (1E)-2,6-dimethylhepta-1,5-dien-1-yl formate + NADP(+) + H2O. It catalyses the reaction sulcatone + NADPH + O2 + H(+) = 4-methylpent-3-en-1-yl acetate + NADP(+) + H2O. Functionally, acts as a Baeyer-Villiger monooxygenase on a broad range of substrates. Catalyzes the insertion of an oxygen atom into a carbon-carbon bond adjacent to a carbonyl, which converts ketones to esters. Active on diverse carbonyl compounds, whereas soft nucleophiles are mostly non- or poorly reactive. In contrast with other forms of FMO it is non- or poorly active on 'classical' substrates such as drugs, pesticides, and dietary components containing soft nucleophilic heteroatoms. Able to oxidize drug molecules bearing a carbonyl group on an aliphatic chain, such as nabumetone and pentoxifylline. Also, in the absence of substrates, shows slow but yet significant NADPH oxidase activity. Acts as a positive modulator of cholesterol biosynthesis as well as glucose homeostasis, promoting metabolic aging via pleiotropic effects. This chain is Flavin-containing monooxygenase 5 (FMO5), found in Cavia porcellus (Guinea pig).